The primary structure comprises 325 residues: MRNYYIFSNGRIRRKENTIYIENEQGDRKAIPIEDVDTIHIFGEVDLNTKLLNFICQQGKTVHFYNYYGFYSGSLMPRERNVSGHIVVKQVEHFLDPERRFYLAYSFVEGAIFHMVRNLREYKNTDEFQEKIKKELSNAVETTKISELMGCEGRARDFYYEAFNTFLKSDFSMGKREKRPPRNPINALISFANSMIYTTVLNEIYHTQLNPTVSYLHEPSERRYSLSLDIAEIFKPLLADAIIFKLINNNMIKLDDFEEDVNYCYLNESGRKKFIREFDQKLSTTIKHRKLKRNVSYRTIIRIECYKLIKHFIGDEVYAPFKAWW.

Mn(2+) is bound by residues Glu152, His217, and Glu232.

This sequence belongs to the CRISPR-associated endonuclease Cas1 family. Homodimer, forms a heterotetramer with a Cas2 homodimer. The cofactor is Mg(2+). Mn(2+) serves as cofactor.

Functionally, CRISPR (clustered regularly interspaced short palindromic repeat), is an adaptive immune system that provides protection against mobile genetic elements (viruses, transposable elements and conjugative plasmids). CRISPR clusters contain spacers, sequences complementary to antecedent mobile elements, and target invading nucleic acids. CRISPR clusters are transcribed and processed into CRISPR RNA (crRNA). Acts as a dsDNA endonuclease. Involved in the integration of spacer DNA into the CRISPR cassette. The chain is CRISPR-associated endonuclease Cas1 3 from Thermodesulfovibrio yellowstonii (strain ATCC 51303 / DSM 11347 / YP87).